The sequence spans 440 residues: Phosphatidylcholine-sterol acyltransferase (440 aa).

Positions 1 to 24 (MGPPGSPWQWVTLLLGLLLPPAAP) are cleaved as a signal peptide. An N-linked (GlcNAc...) (complex) asparagine glycan is attached at N44. C74 and C98 are joined by a disulfide. N-linked (GlcNAc...) (complex) asparagine glycosylation occurs at N108. Catalysis depends on S205, which acts as the Nucleophile. N296 is a glycosylation site (N-linked (GlcNAc...) (complex) asparagine). An intrachain disulfide couples C337 to C380. Catalysis depends on charge relay system residues D369 and H401. The N-linked (GlcNAc...) (complex) asparagine glycan is linked to N408. An O-linked (GalNAc...) threonine glycan is attached at T431. Residue S433 is glycosylated (O-linked (GalNAc...) serine).

It belongs to the AB hydrolase superfamily. Lipase family. O- and N-glycosylated. O-glycosylation on Thr-431 and Ser-433 consists of sialylated galactose beta 1--&gt;3N-acetylgalactosamine structures. N-glycosylated sites contain sialylated triantennary and/or biantennary complex structures. As to expression, detected in blood plasma. Detected in cerebral spinal fluid (at protein level). Detected in liver. Expressed mainly in brain, liver and testes.

The protein resides in the secreted. It carries out the reaction a sterol + a 1,2-diacyl-sn-glycero-3-phosphocholine = a sterol ester + a 1-acyl-sn-glycero-3-phosphocholine. The catalysed reaction is a 1-O-alkyl-2-acetyl-sn-glycero-3-phosphocholine + H2O = a 1-O-alkyl-sn-glycero-3-phosphocholine + acetate + H(+). The enzyme catalyses a 1-hexadecanoyl-2-acyl-sn-glycero-3-phosphocholine + (24S)-hydroxycholesterol = (24S)-24-hydroxycholesterol ester + 1-hexadecanoyl-sn-glycero-3-phosphocholine. It catalyses the reaction (24S)-hydroxycholesterol + 1-hexadecanoyl-2-(9Z,12Z-octadecadienoyl)-sn-glycero-3-phosphocholine = (24S)-hydroxycholesterol 3-linoleoate + 1-hexadecanoyl-sn-glycero-3-phosphocholine. It carries out the reaction 1-hexadecanoyl-2-(5Z,8Z,11Z,14Z-eicosatetraenoyl)-sn-glycero-3-phosphocholine + cholesterol = cholesteryl (5Z,8Z,11Z,14Z)-eicosatetraenoate + 1-hexadecanoyl-sn-glycero-3-phosphocholine. The catalysed reaction is 1-hexadecanoyl-2-(9Z-octadecenoyl)-sn-glycero-3-phosphocholine + cholesterol = cholesteryl (9Z-octadecenoate) + 1-hexadecanoyl-sn-glycero-3-phosphocholine. The enzyme catalyses 1-hexadecanoyl-2-(8Z,11Z,14Z-eicosatrienoyl)-sn-glycero-3-phosphocholine + cholesterol = cholesteryl (8Z,11Z,14Z)-eicosatrienoate + 1-hexadecanoyl-sn-glycero-3-phosphocholine. It catalyses the reaction 1-hexadecanoyl-2-(5Z,8Z,11Z-eicosatrienoyl)-sn-glycero-3-phosphocholine + cholesterol = cholesteryl (5Z,8Z,11Z)-eicosatrienoate + 1-hexadecanoyl-sn-glycero-3-phosphocholine. It carries out the reaction 1-hexadecanoyl-2-(5Z,8Z,11Z,14Z,17Z-eicosapentaenoyl)-sn-glycero-3-phosphocholine + cholesterol = (5Z,8Z,11Z,14Z,17Z-eicosapentaenoyl)-cholesterol + 1-hexadecanoyl-sn-glycero-3-phosphocholine. The catalysed reaction is 1-hexadecanoyl-2-(9Z,12Z-octadecadienoyl)-sn-glycero-3-phosphocholine + cholesterol = cholesteryl (9Z,12Z)-octadecadienoate + 1-hexadecanoyl-sn-glycero-3-phosphocholine. The enzyme catalyses 1-hexadecanoyl-2-(6Z,9Z,12Z-octadecatrienoyl)-sn-glycero-3-phosphocholine + cholesterol = (6Z,9Z,12Z-octadecatrienoyl)-cholesterol + 1-hexadecanoyl-sn-glycero-3-phosphocholine. It catalyses the reaction 1-hexadecanoyl-2-(11Z,14Z,17Z-eicosatrienoyl)-sn-glycero-3-phosphocholine + cholesterol = (11Z,14Z,17Z-eicosatrienoyl)-cholesterol + 1-hexadecanoyl-sn-glycero-3-phosphocholine. It carries out the reaction 1-hexadecanoyl-2-(9Z,12Z,15Z-octadecatrienoyl)-sn-glycero-3-phosphocholine + cholesterol = (9Z,12Z,15Z-octadecatrienoyl)-cholesterol + 1-hexadecanoyl-sn-glycero-3-phosphocholine. The catalysed reaction is 1-hexadecanoyl-2-(9Z,12Z-octadecadienoyl)-sn-glycero-3-phosphocholine + H2O = (9Z,12Z)-octadecadienoate + 1-hexadecanoyl-sn-glycero-3-phosphocholine + H(+). The enzyme catalyses 1-hexadecanoyl-2-(5Z,8Z,11Z,14Z-eicosatetraenoyl)-sn-glycero-3-phosphocholine + H2O = 1-hexadecanoyl-sn-glycero-3-phosphocholine + (5Z,8Z,11Z,14Z)-eicosatetraenoate + H(+). It catalyses the reaction a 1-O-alkyl-2-acetyl-sn-glycero-3-phosphocholine + 1-hexadecanoyl-sn-glycero-3-phosphocholine = 1-hexadecanoyl-2-acetyl-sn-glycero-3-phosphocholine + a 1-O-alkyl-sn-glycero-3-phosphocholine. Its activity is regulated as follows. APOA1 is the most potent activator in plasma. Also activated by APOE, APOC1 and APOA4. Inhibited by haptoglobin and 5,5'-dithiobis-(2-nitrobenzoic acid) (DTNB). In terms of biological role, central enzyme in the extracellular metabolism of plasma lipoproteins. Synthesized mainly in the liver and secreted into plasma where it converts cholesterol and phosphatidylcholines (lecithins) to cholesteryl esters and lysophosphatidylcholines on the surface of high and low density lipoproteins (HDLs and LDLs). The cholesterol ester is then transported back to the liver. Has a preference for plasma 16:0-18:2 or 18:O-18:2 phosphatidylcholines. Also produced in the brain by primary astrocytes, and esterifies free cholesterol on nascent APOE-containing lipoproteins secreted from glia and influences cerebral spinal fluid (CSF) APOE- and APOA1 levels. Together with APOE and the cholesterol transporter ABCA1, plays a key role in the maturation of glial-derived, nascent lipoproteins. Required for remodeling high-density lipoprotein particles into their spherical forms. Catalyzes the hydrolysis of 1-O-alkyl-2-acetyl-sn-glycero-3-phosphocholine (platelet-activating factor or PAF) to 1-O-alkyl-sn-glycero-3-phosphocholine (lyso-PAF). Also catalyzes the transfer of the acetate group from PAF to 1-hexadecanoyl-sn-glycero-3-phosphocholine forming lyso-PAF. Catalyzes the esterification of (24S)-hydroxycholesterol (24(S)OH-C), also known as cerebrosterol to produce 24(S)OH-C monoesters. The chain is Phosphatidylcholine-sterol acyltransferase (LCAT) from Homo sapiens (Human).